A 51-amino-acid polypeptide reads, in one-letter code: Small ribosomal subunit protein eS31 (51 aa).

Positions 22, 25, 40, and 43 each coordinate Zn(2+). The C4-type zinc finger occupies C22–C43.

The protein belongs to the eukaryotic ribosomal protein eS31 family. As to quaternary structure, part of the 30S ribosomal subunit. Requires Zn(2+) as cofactor.

The polypeptide is Small ribosomal subunit protein eS31 (Methanosphaera stadtmanae (strain ATCC 43021 / DSM 3091 / JCM 11832 / MCB-3)).